Here is a 205-residue protein sequence, read N- to C-terminus: ATP synthase subunit b 1 (205 aa).

Residues 1 to 15 (MFVSTAFAQTATESQ) are compositionally biased toward polar residues. The interval 1 to 26 (MFVSTAFAQTATESQPAPAAGEHGAA) is disordered. Low complexity predominate over residues 16–26 (PAPAAGEHGAA). A helical transmembrane segment spans residues 56-78 (SQILWLAITFGLFYLFMSRVVLP).

It belongs to the ATPase B chain family. F-type ATPases have 2 components, F(1) - the catalytic core - and F(0) - the membrane proton channel. F(1) has five subunits: alpha(3), beta(3), gamma(1), delta(1), epsilon(1). F(0) has three main subunits: a(1), b(2) and c(10-14). The alpha and beta chains form an alternating ring which encloses part of the gamma chain. F(1) is attached to F(0) by a central stalk formed by the gamma and epsilon chains, while a peripheral stalk is formed by the delta and b chains.

It is found in the cell inner membrane. In terms of biological role, f(1)F(0) ATP synthase produces ATP from ADP in the presence of a proton or sodium gradient. F-type ATPases consist of two structural domains, F(1) containing the extramembraneous catalytic core and F(0) containing the membrane proton channel, linked together by a central stalk and a peripheral stalk. During catalysis, ATP synthesis in the catalytic domain of F(1) is coupled via a rotary mechanism of the central stalk subunits to proton translocation. Functionally, component of the F(0) channel, it forms part of the peripheral stalk, linking F(1) to F(0). The sequence is that of ATP synthase subunit b 1 from Brucella anthropi (strain ATCC 49188 / DSM 6882 / CCUG 24695 / JCM 21032 / LMG 3331 / NBRC 15819 / NCTC 12168 / Alc 37) (Ochrobactrum anthropi).